The primary structure comprises 467 residues: Gamma-aminobutyric acid receptor subunit gamma-3 (467 aa).

The N-terminal stretch at 1–17 (MAAKLLLLLCLFSGLHA) is a signal peptide. The Extracellular segment spans residues 18 to 256 (RSRRVEEDDS…FELSRRMGYF (239 aa)). Asn-110 carries an N-linked (GlcNAc...) asparagine glycan. An intrachain disulfide couples Cys-171 to Cys-185. Asn-228 is a glycosylation site (N-linked (GlcNAc...) asparagine). The chain crosses the membrane as a helical span at residues 257–277 (TIQTYIPCILTVVLSWVSFWI). Over 278–283 (KKDATP) the chain is Cytoplasmic. The chain crosses the membrane as a helical span at residues 284–303 (ARTTLGITTVLTMTTLSTIA). Over 304–311 (RKSLPRVS) the chain is Extracellular. The helical transmembrane segment at 312–332 (YVTAMDLFVTVCFLFVFAALM) threads the bilayer. The Cytoplasmic portion of the chain corresponds to 333–446 (EYATLNYYSS…DVSELDSYSR (114 aa)). Residues 447-467 (VFFPTSFLLFNLVYWVGYLYL) traverse the membrane as a helical segment.

This sequence belongs to the ligand-gated ion channel (TC 1.A.9) family. Gamma-aminobutyric acid receptor (TC 1.A.9.5) subfamily. GABRG3 sub-subfamily. As to quaternary structure, heteropentamer, formed by a combination of alpha (GABRA1-6), beta (GABRB1-3), gamma (GABRG1-3), delta (GABRD), epsilon (GABRE), rho (GABRR1-3), pi (GABRP) and theta (GABRQ) chains, each subunit exhibiting distinct physiological and pharmacological properties. In terms of processing, may be palmitoylated. In terms of tissue distribution, expressed in brain.

The protein localises to the postsynaptic cell membrane. It is found in the cell membrane. It catalyses the reaction chloride(in) = chloride(out). Its activity is regulated as follows. Allosterically potentiated by alphaxalone. Allosterically inhibited by pregnenolone sulfate. Inhibited by zinc and lanthanum. Its function is as follows. Gamma subunit of the heteropentameric ligand-gated chloride channel gated by gamma-aminobutyric acid (GABA), a major inhibitory neurotransmitter in the brain. GABA-gated chloride channels, also named GABA(A) receptors (GABAAR), consist of five subunits arranged around a central pore and contain GABA active binding site(s) located at the alpha and beta subunit interface(s). When activated by GABA, GABAARs selectively allow the flow of chloride across the cell membrane down their electrochemical gradient. This chain is Gamma-aminobutyric acid receptor subunit gamma-3, found in Rattus norvegicus (Rat).